The primary structure comprises 108 residues: PTS system cellobiose-specific EIIB component (108 aa).

A PTS EIIB type-3 domain is found at 3–108; the sequence is DKVIALACAA…VLAAAENLMN (106 aa). Cysteine 10 functions as the Phosphocysteine intermediate in the catalytic mechanism. Phosphocysteine; by EIIA is present on cysteine 10.

The catalysed reaction is D-cellobiose(out) + N(pros)-phospho-L-histidyl-[protein] = 6-phospho-beta-D-glucosyl-(1-&gt;4)-D-glucose(in) + L-histidyl-[protein]. Functionally, the phosphoenolpyruvate-dependent sugar phosphotransferase system (sugar PTS), a major carbohydrate active transport system, catalyzes the phosphorylation of incoming sugar substrates concomitantly with their translocation across the cell membrane. Involved in cellobiose transport with PtcA and CelB. This system can also transport lactose. This is PTS system cellobiose-specific EIIB component from Lactococcus lactis subsp. lactis (strain IL1403) (Streptococcus lactis).